Consider the following 299-residue polypeptide: Delta-9 desaturase-like 2 protein (299 aa).

Residues 55-75 (WEAFRFGIILAILTNLCITFS) traverse the membrane as a helical segment. Residues 77–82 (HRNLTH) carry the Histidine box-1 motif. A Histidine box-2 motif is present at residues 114–118 (HRFHH). Residues 174–194 (LVLHILAFWTLIYLWGGLPYL) form a helical membrane-spanning segment. The Histidine box-3 signature appears at 246–250 (HNNHH). The chain crosses the membrane as a helical span at residues 262–282 (WYQLDITWYLIWFFQALGLAT).

Belongs to the fatty acid desaturase type 1 family. Fe cation serves as cofactor.

It localises to the endoplasmic reticulum membrane. It participates in lipid metabolism; polyunsaturated fatty acid biosynthesis. The protein is Delta-9 desaturase-like 2 protein of Arabidopsis thaliana (Mouse-ear cress).